Reading from the N-terminus, the 315-residue chain is Cobalamin biosynthesis protein CobD (315 aa).

Helical transmembrane passes span 54–74 (GLLF…ILFL), 78–98 (IAYW…LAMT), 152–172 (ADGV…LALM), 203–223 (IANF…SFIL), and 295–315 (LLYT…LLLF).

This sequence belongs to the CobD/CbiB family.

Its subcellular location is the cell membrane. Its pathway is cofactor biosynthesis; adenosylcobalamin biosynthesis. Functionally, converts cobyric acid to cobinamide by the addition of aminopropanol on the F carboxylic group. This chain is Cobalamin biosynthesis protein CobD, found in Listeria monocytogenes serotype 4b (strain F2365).